The primary structure comprises 556 residues: Arginine--tRNA ligase (556 aa).

Positions A133–H143 match the 'HIGH' region motif.

This sequence belongs to the class-I aminoacyl-tRNA synthetase family. As to quaternary structure, monomer.

It localises to the cytoplasm. The catalysed reaction is tRNA(Arg) + L-arginine + ATP = L-arginyl-tRNA(Arg) + AMP + diphosphate. This Dehalococcoides mccartyi (strain CBDB1) protein is Arginine--tRNA ligase.